The primary structure comprises 662 residues: MRGCLQLARWLSAAPNWPASSLLKAPGSSFATRLFTTTSSYKAKGPSKVPMTDLEARISAIPIERYRNFCIVAHVDHGKSTLSDRLLELTGTIKPGMNKQVLDKLDVERERGITVKAQTCTMIYNHKGEDYLLHLVDTPGHVDFRAEVSRSYASCGGALLLVDASQGIQAQTVANFYLAFSQGLELIPVINKVDLPSAEPERALEQLEQSFELDTEDAVLVSAKTGLNVEQLLPTVVEKIPAPIGDCKRPLRMLLVDSWYDSYKGVICLVRVFDGEVRAGQQVVSFATGIKYYVGEVGIQYPLETPQTVLRAGQVGYIFFNPGMKRSKEAKIGDTFTTVGSEKAVQPLPGFEEPKAMVFVAAYPVDADHFEHLEDSINQLVLNDRSITVQKESSEALGAGFRLGFLGTLHCSVFEDRLRQEHGASIIITPPSVPVKVVWKDGKEDIITNPNRFPDEDDVRMKVAELQEPYVMATLTFPDEYLGTVIELCEANRGEQKSLEYFTPTQVILKYELPLAQLVDDFFGKLKGGTKGYASLDYEESGWKPSNIVKLQLLVNKAPVDAVARLVHYSQTDRLGRQWVTKFKEHVDRQLFEIIIQAAVGKKIVARETVKPYRKDVLAKLHASDVSRRRKLLEKQKEGRKRLRAVGNVVIEHKAFQAFLAK.

The N-terminal 42 residues, 1–42 (MRGCLQLARWLSAAPNWPASSLLKAPGSSFATRLFTTTSSYK), are a transit peptide targeting the mitochondrion. Residues 64–244 (ERYRNFCIVA…TVVEKIPAPI (181 aa)) enclose the tr-type G domain. GTP is bound by residues 73–80 (AHVDHGKS), 137–141 (DTPGH), and 191–194 (NKVD).

The protein belongs to the TRAFAC class translation factor GTPase superfamily. Classic translation factor GTPase family. LepA subfamily.

Its subcellular location is the mitochondrion inner membrane. It catalyses the reaction GTP + H2O = GDP + phosphate + H(+). Functionally, promotes mitochondrial protein synthesis. May act as a fidelity factor of the translation reaction, by catalyzing a one-codon backward translocation of tRNAs on improperly translocated ribosomes. Binds to mitochondrial ribosomes in a GTP-dependent manner. In Emericella nidulans (strain FGSC A4 / ATCC 38163 / CBS 112.46 / NRRL 194 / M139) (Aspergillus nidulans), this protein is Translation factor guf1, mitochondrial (guf1).